The sequence spans 437 residues: Nicotinate phosphoribosyltransferase (437 aa).

Position 231 is a phosphohistidine; by autocatalysis (H231).

It belongs to the NAPRTase family. In terms of processing, transiently phosphorylated on a His residue during the reaction cycle. Phosphorylation strongly increases the affinity for substrates and increases the rate of nicotinate D-ribonucleotide production. Dephosphorylation regenerates the low-affinity form of the enzyme, leading to product release.

The enzyme catalyses nicotinate + 5-phospho-alpha-D-ribose 1-diphosphate + ATP + H2O = nicotinate beta-D-ribonucleotide + ADP + phosphate + diphosphate. The protein operates within cofactor biosynthesis; NAD(+) biosynthesis; nicotinate D-ribonucleotide from nicotinate: step 1/1. In terms of biological role, catalyzes the synthesis of beta-nicotinate D-ribonucleotide from nicotinate and 5-phospho-D-ribose 1-phosphate at the expense of ATP. The protein is Nicotinate phosphoribosyltransferase of Vibrio vulnificus (strain CMCP6).